The sequence spans 792 residues: Starch synthase 2, chloroplastic/amyloplastic (792 aa).

The N-terminal 55 residues, 1–55, are a transit peptide targeting the chloroplast; it reads MASVAESSFPLLCQIKTQRRINSSTLRHSRVSYHDLPSGSLSFRSRSFVLGHRCK. Positions 105-295 are disordered; sequence IKESTPDLDD…GKDEEKPPPL (191 aa). Over residues 145–156 the composition is skewed to polar residues; it reads GSVSPSTYGKSS. Low complexity predominate over residues 179-192; sequence SSASVISSSPVTSP. The segment covering 221 to 233 has biased composition (polar residues); that stretch reads SVMTSPEKTSDPV. Basic and acidic residues predominate over residues 266 to 275; the sequence is KTEKYVEKTP. Lys-315 is an ADP-alpha-D-glucose binding site.

It belongs to the glycosyltransferase 1 family. Bacterial/plant glycogen synthase subfamily. As to expression, expressed in roots, leaves and flowers.

It is found in the plastid. Its subcellular location is the chloroplast. The protein localises to the amyloplast. It catalyses the reaction [(1-&gt;4)-alpha-D-glucosyl](n) + ADP-alpha-D-glucose = [(1-&gt;4)-alpha-D-glucosyl](n+1) + ADP + H(+). It participates in glycan biosynthesis; starch biosynthesis. Functionally, involved in the synthesis of glycan chains within amylopectin in leaves. Is required to produce chains with a degree of polymerization of 12 to 25 (DP12-DP25). The polypeptide is Starch synthase 2, chloroplastic/amyloplastic (SS2) (Arabidopsis thaliana (Mouse-ear cress)).